Reading from the N-terminus, the 278-residue chain is 4-deoxy-L-threo-5-hexosulose-uronate ketol-isomerase (278 aa).

The Zn(2+) site is built by H196, H198, E203, and H245.

This sequence belongs to the KduI family. The cofactor is Zn(2+).

The catalysed reaction is 5-dehydro-4-deoxy-D-glucuronate = 3-deoxy-D-glycero-2,5-hexodiulosonate. The protein operates within glycan metabolism; pectin degradation; 2-dehydro-3-deoxy-D-gluconate from pectin: step 4/5. Its function is as follows. Catalyzes the isomerization of 5-dehydro-4-deoxy-D-glucuronate to 3-deoxy-D-glycero-2,5-hexodiulosonate. This Shigella flexneri protein is 4-deoxy-L-threo-5-hexosulose-uronate ketol-isomerase.